A 532-amino-acid chain; its full sequence is Cyclin-L1 (532 aa).

Cyclin-like regions lie at residues Glu94–Lys196 and Lys209–Arg293. The residue at position 331 (Thr331) is a Phosphothreonine. Positions Pro332 to Arg532 are disordered. Phosphoserine occurs at positions 341 and 344. Residues Lys345 and Lys353 each participate in a glycyl lysine isopeptide (Lys-Gly) (interchain with G-Cter in SUMO2) cross-link. A compositionally biased stretch (basic and acidic residues) spans Ser348 to Ser358. Phosphoserine is present on residues Ser358 and Ser361. Residues Val367–Gln376 show a composition bias toward basic and acidic residues. A Glycyl lysine isopeptide (Lys-Gly) (interchain with G-Cter in SUMO2) cross-link involves residue Lys368. Ser380 is subject to Phosphoserine. Basic residues-rich tracts occupy residues Asp388–Arg424, Arg444–His458, Ser466–Ser482, and Lys492–Arg504. The tract at residues Arg396–Ser438 is RS. A Phosphoserine modification is found at Ser451. Residues Arg505–Ser514 show a composition bias toward basic and acidic residues. Over residues His515–Arg532 the composition is skewed to basic residues.

This sequence belongs to the cyclin family. Cyclin L subfamily. In terms of assembly, interacts with POLR2A via its hyperphosphorylated C-terminal domain (CTD). Interacts with CDK11A, CDK11B, CDK12 and CDK13. May form a ternary complex with CDK11B and casein kinase II (CKII). Interacts with pre-mRNA-splicing factors, including at least SRSF1, SRSF2 and SRSF7/SLU7. Widely expressed (at protein level).

Its subcellular location is the nucleus speckle. The protein resides in the nucleus. It localises to the nucleoplasm. The protein localises to the cytoplasm. Involved in pre-mRNA splicing. Functions in association with cyclin-dependent kinases (CDKs). May play a role in the regulation of RNA polymerase II (pol II). Inhibited by the CDK-specific inhibitor CDKN1A/p21. The chain is Cyclin-L1 (Ccnl1) from Mus musculus (Mouse).